The sequence spans 704 residues: Polyribonucleotide nucleotidyltransferase (704 aa).

Positions 485 and 491 each coordinate Mg(2+). A KH domain is found at 552–611 (PKTETIQIDPDKIRSVIGAGGKVINKIIQDTGVKIDIKEDGSVFVSSSDHAGVKEAIKII). An S1 motif domain is found at 621 to 689 (GEIYLGKVTK…SQGRINLSRK (69 aa)).

The protein belongs to the polyribonucleotide nucleotidyltransferase family. Mg(2+) serves as cofactor.

It localises to the cytoplasm. The enzyme catalyses RNA(n+1) + phosphate = RNA(n) + a ribonucleoside 5'-diphosphate. Involved in mRNA degradation. Catalyzes the phosphorolysis of single-stranded polyribonucleotides processively in the 3'- to 5'-direction. The polypeptide is Polyribonucleotide nucleotidyltransferase (Clostridium botulinum (strain Eklund 17B / Type B)).